The chain runs to 142 residues: ATP synthase epsilon chain (142 aa).

It belongs to the ATPase epsilon chain family. As to quaternary structure, F-type ATPases have 2 components, CF(1) - the catalytic core - and CF(0) - the membrane proton channel. CF(1) has five subunits: alpha(3), beta(3), gamma(1), delta(1), epsilon(1). CF(0) has three main subunits: a, b and c.

The protein localises to the cell inner membrane. Its function is as follows. Produces ATP from ADP in the presence of a proton gradient across the membrane. This is ATP synthase epsilon chain from Shewanella putrefaciens (strain CN-32 / ATCC BAA-453).